A 131-amino-acid chain; its full sequence is uncharacterized protein (131 aa).

This is an uncharacterized protein from Escherichia coli.